Consider the following 684-residue polypeptide: Glycine--tRNA ligase beta subunit (684 aa).

This sequence belongs to the class-II aminoacyl-tRNA synthetase family. As to quaternary structure, tetramer of two alpha and two beta subunits.

It localises to the cytoplasm. It catalyses the reaction tRNA(Gly) + glycine + ATP = glycyl-tRNA(Gly) + AMP + diphosphate. The protein is Glycine--tRNA ligase beta subunit of Pseudomonas syringae pv. syringae (strain B728a).